Reading from the N-terminus, the 291-residue chain is Nucleotide-binding protein PPA0813 (291 aa).

ATP is bound at residue 17 to 24 (GISGAGRR). A GTP-binding site is contributed by 66-69 (DVRS).

It belongs to the RapZ-like family.

Its function is as follows. Displays ATPase and GTPase activities. The protein is Nucleotide-binding protein PPA0813 of Cutibacterium acnes (strain DSM 16379 / KPA171202) (Propionibacterium acnes).